The chain runs to 427 residues: Glutamate-1-semialdehyde 2,1-aminomutase (427 aa).

The residue at position 268 (Lys-268) is an N6-(pyridoxal phosphate)lysine.

It belongs to the class-III pyridoxal-phosphate-dependent aminotransferase family. HemL subfamily. Requires pyridoxal 5'-phosphate as cofactor.

The protein localises to the cytoplasm. The enzyme catalyses (S)-4-amino-5-oxopentanoate = 5-aminolevulinate. Its pathway is porphyrin-containing compound metabolism; protoporphyrin-IX biosynthesis; 5-aminolevulinate from L-glutamyl-tRNA(Glu): step 2/2. This is Glutamate-1-semialdehyde 2,1-aminomutase from Methanococcus maripaludis (strain C5 / ATCC BAA-1333).